The primary structure comprises 133 residues: Peptide methionine sulfoxide reductase MsrB (133 aa).

Positions 8 to 130 (LEEWRAMLDP…NSVCLDFKPR (123 aa)) constitute a MsrB domain. The Zn(2+) site is built by cysteine 47, cysteine 50, cysteine 96, and cysteine 99. Residue cysteine 119 is the Nucleophile of the active site.

The protein belongs to the MsrB Met sulfoxide reductase family. The cofactor is Zn(2+).

The catalysed reaction is L-methionyl-[protein] + [thioredoxin]-disulfide + H2O = L-methionyl-(R)-S-oxide-[protein] + [thioredoxin]-dithiol. This chain is Peptide methionine sulfoxide reductase MsrB, found in Pseudomonas putida (strain W619).